Consider the following 72-residue polypeptide: DNA gyrase inhibitor YacG (72 aa).

Residues C7, C10, C26, and C30 each coordinate Zn(2+). Residues 44 to 72 (SIAGEEHTPSSDTARPQLSAEDLALLEQD) form a disordered region.

This sequence belongs to the DNA gyrase inhibitor YacG family. Interacts with GyrB. Requires Zn(2+) as cofactor.

In terms of biological role, inhibits all the catalytic activities of DNA gyrase by preventing its interaction with DNA. Acts by binding directly to the C-terminal domain of GyrB, which probably disrupts DNA binding by the gyrase. This is DNA gyrase inhibitor YacG from Tolumonas auensis (strain DSM 9187 / NBRC 110442 / TA 4).